The sequence spans 51 residues: Large ribosomal subunit protein eL39 (51 aa).

This sequence belongs to the eukaryotic ribosomal protein eL39 family.

The sequence is that of Large ribosomal subunit protein eL39 from Thermococcus gammatolerans (strain DSM 15229 / JCM 11827 / EJ3).